Here is a 176-residue protein sequence, read N- to C-terminus: Large ribosomal subunit protein uL6 (176 aa).

A compositionally biased stretch (basic and acidic residues) spans 151–169; the sequence is RPPEPYKGRGIKYTDEHIQ. Positions 151–176 are disordered; that stretch reads RPPEPYKGRGIKYTDEHIQRKAGKTK.

Belongs to the universal ribosomal protein uL6 family. In terms of assembly, part of the 50S ribosomal subunit.

Its function is as follows. This protein binds to the 23S rRNA, and is important in its secondary structure. It is located near the subunit interface in the base of the L7/L12 stalk, and near the tRNA binding site of the peptidyltransferase center. This chain is Large ribosomal subunit protein uL6, found in Desulfosudis oleivorans (strain DSM 6200 / JCM 39069 / Hxd3) (Desulfococcus oleovorans).